Consider the following 528-residue polypeptide: MFSLQDLCRKNTFFLPNDFKKHTLQLLGLYWKEHGSVHRAEKDNIMIQNELILTVNDALQLAGEEGDTDVVQLLLLWEGNLHYAIIGALKAENYNLICEYHSQIEDWHALLPLIQDPETFEKCHELSLGCDLLCLLQHAIKCNMLSILVKYKEDLLNARIRHRIQSLFVLACETRRIEIILWIGQNLPIPEPETIFSIAVITKDLELFSLGYKIIFDYMQRQGIFQLSEVVRKILLNRHIDMAVNKGLLPFVLETFKYGGSVKRALSCAVMDNKRKVIDYLVRHENISHQTIERLLYLAVKKHSSRKTLNLLLSYINYKVKNIKKLLDHVLGGNSTLVLKILLEKKQNLVDAALTRLVKHSTYFRVKEFIEDFSISPEKFIKIAVREQKNVIIKVICEDIWENPAERIRYLKQIVSSIKYESGRQFLINIIHTIYQSHSLKPEEIFKLATFYVKHNAVTHFKDLCKFLWLNRGTESKKHFLKCLEIADEKDFPAIKSIVSEYINYMFTAGTMTKDEIMQAYASEYTMC.

It belongs to the asfivirus MGF 505 family. Interacts with host STING1. Interacts with host JAK1; this interaction leads to JAK1 degradation. Interacts with host JAK2; this interaction leads to JAK2 degradation. Interacts with host RELA; this interaction inhibits NF-kappa-B promoter activity.

It localises to the host cytoplasm. Plays a role in virus cell tropism, and may be required for efficient virus replication in macrophages. Interferes with host NF-kappa-B promoter activity mediated by TLR8. Mechanistically, inhibits the phosphorylation and subsequent nuclear translocation of host NF-kappa-B RELA subunit downstream of TLR8. Promotes the expression of the autophagy-related protein host ULK1 to degrade host STING and inhibit the interferon response. Also inhibits JAK1- and JAK2-mediated signaling and thus negatively regulates the IFN-gamma signaling. This African swine fever virus (isolate Pig/Kenya/KEN-50/1950) (ASFV) protein is Protein MGF 505-7R.